The sequence spans 145 residues: Ribosomal protein uL24-like (145 aa).

2 disordered regions span residues 1–21 and 122–145; these read MKFNPFVTSDRSKNRKRHFNA and KAKSRQVGKEKGKYKEELIEKMQE. Glycyl lysine isopeptide (Lys-Gly) (interchain with G-Cter in SUMO2) cross-links involve residues Lys136 and Lys142.

Belongs to the universal ribosomal protein uL24 family.

The protein is Ribosomal protein uL24-like (RPL26L1) of Homo sapiens (Human).